We begin with the raw amino-acid sequence, 195 residues long: dITP/XTP pyrophosphatase (195 aa).

Residue 8 to 13 (SGNAGK) coordinates substrate. Mg(2+) contacts are provided by E38 and D67. The Proton acceptor role is filled by D67. Substrate is bound by residues S68, 146–149 (FGYD), K169, and 174–175 (HR).

Belongs to the HAM1 NTPase family. Homodimer. Mg(2+) is required as a cofactor.

It carries out the reaction XTP + H2O = XMP + diphosphate + H(+). The enzyme catalyses dITP + H2O = dIMP + diphosphate + H(+). The catalysed reaction is ITP + H2O = IMP + diphosphate + H(+). Functionally, pyrophosphatase that catalyzes the hydrolysis of nucleoside triphosphates to their monophosphate derivatives, with a high preference for the non-canonical purine nucleotides XTP (xanthosine triphosphate), dITP (deoxyinosine triphosphate) and ITP. Seems to function as a house-cleaning enzyme that removes non-canonical purine nucleotides from the nucleotide pool, thus preventing their incorporation into DNA/RNA and avoiding chromosomal lesions. The sequence is that of dITP/XTP pyrophosphatase from Parasynechococcus marenigrum (strain WH8102).